The sequence spans 339 residues: Formyl peptide receptor-related sequence 6 (339 aa).

The Extracellular portion of the chain corresponds to 1 to 23; that stretch reads MEANFSIPQNGSEVVFYDSTTSR. N-linked (GlcNAc...) asparagine glycosylation is found at N4 and N10. A helical transmembrane segment spans residues 24–44; that stretch reads VICIFLVVVLSITFLLGVIGN. Residues 45–62 are Cytoplasmic-facing; sequence GLVIYVAGFRMTHTVTTI. The helical transmembrane segment at 63-85 threads the bilayer; sequence CYLNLALSDFSYMASLPFQITSI. Topologically, residues 86–99 are extracellular; the sequence is VMNGEWLFGWFLCK. C98 and C178 are oxidised to a cystine. Residues 100 to 120 traverse the membrane as a helical segment; that stretch reads FVHMIINVNLFLSIFLITFIA. Topologically, residues 121–144 are cytoplasmic; the sequence is MDRCICVLHPVWAQNHRTVNVATK. The chain crosses the membrane as a helical span at residues 145–165; sequence VIFGAWILVLMLIFPHCIFVT. The Extracellular segment spans residues 166 to 198; the sequence is TVKDESGKVHCICNFESWAATPEEQVKVSMTVS. A helical transmembrane segment spans residues 199–219; it reads LISVTISFIIGFSIPMIFIVI. Residues 220 to 241 lie on the Cytoplasmic side of the membrane; sequence CYGLMAAKIGRRGFVNSSRPLR. The chain crosses the membrane as a helical span at residues 242 to 262; sequence VLTAVAISFFVCWFPFQLIFL. The Extracellular segment spans residues 263–280; it reads LGNIGNKETQNNIDTWVN. The helical transmembrane segment at 281–301 threads the bilayer; the sequence is TASTLASFNSCLNPILYVFLG. Residues 302-339 lie on the Cytoplasmic side of the membrane; sequence QQFRERLIYSLSASLERALREDSALNSDKTRNLSSQRL.

It belongs to the G-protein coupled receptor 1 family. Expressed exclusively in vomeronasal tissue. Expressed in 1.2 % of a subset of sensory neurons located in the apical layer of the vomeronasal organ. Each neuron appears to express only one receptor gene. Expressed in brain, spleen, skeletal muscle and at high level in testis.

The protein resides in the membrane. May have an olfactory function associated with the identification of pathogens or of pathogenic states. In Mus musculus (Mouse), this protein is Formyl peptide receptor-related sequence 6 (Fpr-rs6).